The primary structure comprises 196 residues: Glycerol-3-phosphate acyltransferase (196 aa).

4 helical membrane passes run 4–24, 80–100, 114–134, and 155–175; these read LTLLMILSAYLLGSISSAVVI, PFFLGLIAVAACLGHIFPLYF, AMFPVAWEMALLLIATWLLVF, and AYWIKPQYTVPVIMISLLILW.

The protein belongs to the PlsY family. Probably interacts with PlsX.

It is found in the cell inner membrane. It catalyses the reaction an acyl phosphate + sn-glycerol 3-phosphate = a 1-acyl-sn-glycero-3-phosphate + phosphate. It functions in the pathway lipid metabolism; phospholipid metabolism. Its function is as follows. Catalyzes the transfer of an acyl group from acyl-phosphate (acyl-PO(4)) to glycerol-3-phosphate (G3P) to form lysophosphatidic acid (LPA). This enzyme utilizes acyl-phosphate as fatty acyl donor, but not acyl-CoA or acyl-ACP. In Idiomarina loihiensis (strain ATCC BAA-735 / DSM 15497 / L2-TR), this protein is Glycerol-3-phosphate acyltransferase.